Consider the following 452-residue polypeptide: tRNA modification GTPase MnmE (452 aa).

(6S)-5-formyl-5,6,7,8-tetrahydrofolate contacts are provided by R21, E82, and R121. One can recognise a TrmE-type G domain in the interval 217–373 (GINTTIIGKP…LENKIIEMFN (157 aa)). K(+) is bound at residue N227. Residues 227–232 (NVGKSS), 246–252 (TDIPGTT), and 271–274 (DTAG) contribute to the GTP site. Mg(2+) is bound at residue S231. Residues T246, I248, and T251 each contribute to the K(+) site. T252 is a binding site for Mg(2+). K452 contributes to the (6S)-5-formyl-5,6,7,8-tetrahydrofolate binding site.

It belongs to the TRAFAC class TrmE-Era-EngA-EngB-Septin-like GTPase superfamily. TrmE GTPase family. Homodimer. Heterotetramer of two MnmE and two MnmG subunits. The cofactor is K(+).

It localises to the cytoplasm. Functionally, exhibits a very high intrinsic GTPase hydrolysis rate. Involved in the addition of a carboxymethylaminomethyl (cmnm) group at the wobble position (U34) of certain tRNAs, forming tRNA-cmnm(5)s(2)U34. This chain is tRNA modification GTPase MnmE, found in Finegoldia magna (strain ATCC 29328 / DSM 20472 / WAL 2508) (Peptostreptococcus magnus).